The chain runs to 122 residues: Large ribosomal subunit protein uL14 (122 aa).

The protein belongs to the universal ribosomal protein uL14 family. Part of the 50S ribosomal subunit. Forms a cluster with proteins L3 and L19. In the 70S ribosome, L14 and L19 interact and together make contacts with the 16S rRNA in bridges B5 and B8.

Its function is as follows. Binds to 23S rRNA. Forms part of two intersubunit bridges in the 70S ribosome. The sequence is that of Large ribosomal subunit protein uL14 from Campylobacter jejuni subsp. jejuni serotype O:6 (strain 81116 / NCTC 11828).